The chain runs to 309 residues: Porphobilinogen deaminase (309 aa).

C242 carries the post-translational modification S-(dipyrrolylmethanemethyl)cysteine.

This sequence belongs to the HMBS family. Monomer. Requires dipyrromethane as cofactor.

The enzyme catalyses 4 porphobilinogen + H2O = hydroxymethylbilane + 4 NH4(+). Its pathway is porphyrin-containing compound metabolism; protoporphyrin-IX biosynthesis; coproporphyrinogen-III from 5-aminolevulinate: step 2/4. Its function is as follows. Tetrapolymerization of the monopyrrole PBG into the hydroxymethylbilane pre-uroporphyrinogen in several discrete steps. This is Porphobilinogen deaminase from Actinobacillus succinogenes (strain ATCC 55618 / DSM 22257 / CCUG 43843 / 130Z).